We begin with the raw amino-acid sequence, 1291 residues long: Vacuolating cytotoxin autotransporter (1291 aa).

An N-terminal signal peptide occupies residues 1 to 33 (MEIQQTHRKINRPLVSLALVGALVSITPQQSHA). The tract at residues 326-374 (PPEGGYKDKPNDKPSNTTQNNAKNDKQESSQNNSNTQVINPPNSAQKTE) is disordered. 2 stretches are compositionally biased toward polar residues: residues 338 to 347 (KPSNTTQNNA) and 354 to 374 (SSQN…QKTE). The 274-residue stretch at 1018 to 1291 (KYEKPTNVWA…ASNLGMRYSF (274 aa)) folds into the Autotransporter domain.

The protein localises to the periplasm. It is found in the secreted. The protein resides in the cell surface. It localises to the cell outer membrane. In terms of biological role, induces vacuolation of eukaryotic cells. Causes ulceration and gastric lesions. The chain is Vacuolating cytotoxin autotransporter (vacA) from Helicobacter pylori (Campylobacter pylori).